Reading from the N-terminus, the 406-residue chain is Arginine biosynthesis bifunctional protein ArgJ (406 aa).

Positions 156, 182, 193, 279, 401, and 406 each coordinate substrate. The active-site Nucleophile is the Thr-193.

Belongs to the ArgJ family. Heterotetramer of two alpha and two beta chains.

Its subcellular location is the cytoplasm. It carries out the reaction N(2)-acetyl-L-ornithine + L-glutamate = N-acetyl-L-glutamate + L-ornithine. The enzyme catalyses L-glutamate + acetyl-CoA = N-acetyl-L-glutamate + CoA + H(+). Its pathway is amino-acid biosynthesis; L-arginine biosynthesis; L-ornithine and N-acetyl-L-glutamate from L-glutamate and N(2)-acetyl-L-ornithine (cyclic): step 1/1. It functions in the pathway amino-acid biosynthesis; L-arginine biosynthesis; N(2)-acetyl-L-ornithine from L-glutamate: step 1/4. In terms of biological role, catalyzes two activities which are involved in the cyclic version of arginine biosynthesis: the synthesis of N-acetylglutamate from glutamate and acetyl-CoA as the acetyl donor, and of ornithine by transacetylation between N(2)-acetylornithine and glutamate. The sequence is that of Arginine biosynthesis bifunctional protein ArgJ from Bacillus licheniformis (strain ATCC 14580 / DSM 13 / JCM 2505 / CCUG 7422 / NBRC 12200 / NCIMB 9375 / NCTC 10341 / NRRL NRS-1264 / Gibson 46).